Reading from the N-terminus, the 446-residue chain is Deoxyguanosinetriphosphate triphosphohydrolase-like protein (446 aa).

The disordered stretch occupies residues 1-28 (MSSSVWQERRHGEDKQRRNDHRSPFQRD). Residues 7-28 (QERRHGEDKQRRNDHRSPFQRD) show a composition bias toward basic and acidic residues. The region spanning 59–252 (RLTHSLEVSQ…MELADDIAYA (194 aa)) is the HD domain.

The protein belongs to the dGTPase family. Type 2 subfamily.

The polypeptide is Deoxyguanosinetriphosphate triphosphohydrolase-like protein (Shewanella sp. (strain MR-7)).